Here is a 710-residue protein sequence, read N- to C-terminus: Polyribonucleotide nucleotidyltransferase (710 aa).

The Mg(2+) site is built by Asp485 and Asp491. The 60-residue stretch at 552–611 folds into the KH domain; that stretch reads PKILTLTINPDKIRDVIGPSGKVINKIIEETGVKIDIEQDGTVYISSLDTAMNQKAKQII. Positions 621–689 constitute an S1 motif domain; the sequence is GETYHGKVKR…NQGRVNLSRK (69 aa).

The protein belongs to the polyribonucleotide nucleotidyltransferase family. Mg(2+) is required as a cofactor.

It is found in the cytoplasm. It carries out the reaction RNA(n+1) + phosphate = RNA(n) + a ribonucleoside 5'-diphosphate. Its function is as follows. Involved in mRNA degradation. Catalyzes the phosphorolysis of single-stranded polyribonucleotides processively in the 3'- to 5'-direction. In Shouchella clausii (strain KSM-K16) (Alkalihalobacillus clausii), this protein is Polyribonucleotide nucleotidyltransferase.